We begin with the raw amino-acid sequence, 425 residues long: Cell adhesion molecule CEACAM16 (425 aa).

An N-terminal signal peptide occupies residues 1 to 20 (MALTGYSWLLLSATFLNVGA). N-linked (GlcNAc...) asparagine glycosylation occurs at N36. 2 Ig-like C2-type domains span residues 133 to 218 (PTVL…INLT) and 223 to 309 (PERV…ASVV). C153 and C201 are disulfide-bonded. Residue N216 is glycosylated (N-linked (GlcNAc...) asparagine). A disulfide bond links C252 and C293. The N-linked (GlcNAc...) asparagine glycan is linked to N394.

This sequence belongs to the immunoglobulin superfamily. CEA family. In terms of assembly, homooligomer; can for homodimers and homotetramers. Interacts with TECTA and TECTB.

The protein resides in the secreted. Required for proper hearing, plays a role in maintaining the integrity of the tectorial membrane. The polypeptide is Cell adhesion molecule CEACAM16 (Homo sapiens (Human)).